We begin with the raw amino-acid sequence, 280 residues long: Pantothenate synthetase (280 aa).

Residue 32 to 39 (MGALHAGH) coordinates ATP. Residue H39 is the Proton donor of the active site. Residue Q63 coordinates (R)-pantoate. Q63 provides a ligand contact to beta-alanine. ATP is bound at residue 149 to 152 (GEKD). Q155 provides a ligand contact to (R)-pantoate. ATP-binding positions include V178 and 186-189 (MSSR).

It belongs to the pantothenate synthetase family. Homodimer.

The protein resides in the cytoplasm. The enzyme catalyses (R)-pantoate + beta-alanine + ATP = (R)-pantothenate + AMP + diphosphate + H(+). The protein operates within cofactor biosynthesis; (R)-pantothenate biosynthesis; (R)-pantothenate from (R)-pantoate and beta-alanine: step 1/1. Catalyzes the condensation of pantoate with beta-alanine in an ATP-dependent reaction via a pantoyl-adenylate intermediate. This chain is Pantothenate synthetase, found in Ruegeria sp. (strain TM1040) (Silicibacter sp.).